The sequence spans 488 residues: Protein nucleotidyltransferase YdiU (488 aa).

ATP is bound by residues G91, G93, R94, K114, D126, G127, R177, and R184. The disordered stretch occupies residues 108 to 127; the sequence is RFDIQLKGSGPTPYSRRGDG. The Proton acceptor role is filled by D253. The Mg(2+) site is built by N254 and D263. D263 contacts ATP.

The protein belongs to the SELO family. It depends on Mg(2+) as a cofactor. Mn(2+) serves as cofactor.

The catalysed reaction is L-seryl-[protein] + ATP = 3-O-(5'-adenylyl)-L-seryl-[protein] + diphosphate. It catalyses the reaction L-threonyl-[protein] + ATP = 3-O-(5'-adenylyl)-L-threonyl-[protein] + diphosphate. The enzyme catalyses L-tyrosyl-[protein] + ATP = O-(5'-adenylyl)-L-tyrosyl-[protein] + diphosphate. It carries out the reaction L-histidyl-[protein] + UTP = N(tele)-(5'-uridylyl)-L-histidyl-[protein] + diphosphate. The catalysed reaction is L-seryl-[protein] + UTP = O-(5'-uridylyl)-L-seryl-[protein] + diphosphate. It catalyses the reaction L-tyrosyl-[protein] + UTP = O-(5'-uridylyl)-L-tyrosyl-[protein] + diphosphate. In terms of biological role, nucleotidyltransferase involved in the post-translational modification of proteins. It can catalyze the addition of adenosine monophosphate (AMP) or uridine monophosphate (UMP) to a protein, resulting in modifications known as AMPylation and UMPylation. The chain is Protein nucleotidyltransferase YdiU from Bacillus cereus (strain AH820).